Consider the following 157-residue polypeptide: 1,4-dihydroxy-2-naphthoyl-CoA thioesterase 2 (157 aa).

The active site involves glutamate 56. The Microbody targeting signal motif lies at isoleucine 154 to lysine 156.

This sequence belongs to the 4-hydroxybenzoyl-CoA thioesterase family. DHNA-CoA hydrolase subfamily. As to quaternary structure, homotetramers.

The protein localises to the peroxisome. Its pathway is cofactor biosynthesis; phylloquinone biosynthesis. It functions in the pathway quinol/quinone metabolism; 1,4-dihydroxy-2-naphthoate biosynthesis; 1,4-dihydroxy-2-naphthoate from chorismate: step 7/7. Catalyzes the hydrolysis of the thioester bond of 1,4-dihydroxy-2-naphthoyl-CoA (DHNA-CoA) in peroxisomes, a necessary step to form the naphthoquinone ring of phylloquinone (vitamin K(1)). Displayed also slight thioesterase activity towards benzoyl-CoA. Is not active on phenylacetyl-CoA, succinyl-CoA and palmitoyl-CoA thioesters. The protein is 1,4-dihydroxy-2-naphthoyl-CoA thioesterase 2 of Arabidopsis thaliana (Mouse-ear cress).